Reading from the N-terminus, the 362-residue chain is GDSL esterase/lipase At5g18430 (362 aa).

The N-terminal stretch at 1–19 is a signal peptide; that stretch reads MTISTVIAFMSMFLVFVMS. The active-site Nucleophile is serine 35. N-linked (GlcNAc...) asparagine glycosylation occurs at asparagine 117. Active-site residues include aspartate 327 and histidine 330. N-linked (GlcNAc...) asparagine glycosylation is present at asparagine 355.

This sequence belongs to the 'GDSL' lipolytic enzyme family.

Its subcellular location is the secreted. This is GDSL esterase/lipase At5g18430 from Arabidopsis thaliana (Mouse-ear cress).